Consider the following 333-residue polypeptide: Glycerol-3-phosphate dehydrogenase [NAD(P)+] (333 aa).

NADPH contacts are provided by Trp13, Lys33, and Lys108. Residues Lys108 and Gly138 each contribute to the sn-glycerol 3-phosphate site. An NADPH-binding site is contributed by Ser142. The sn-glycerol 3-phosphate site is built by Lys193, Asp246, Ser256, Arg257, and Asn258. Catalysis depends on Lys193, which acts as the Proton acceptor. Arg257 contributes to the NADPH binding site. Positions 281 and 283 each coordinate NADPH.

This sequence belongs to the NAD-dependent glycerol-3-phosphate dehydrogenase family.

The protein resides in the cytoplasm. It catalyses the reaction sn-glycerol 3-phosphate + NAD(+) = dihydroxyacetone phosphate + NADH + H(+). The enzyme catalyses sn-glycerol 3-phosphate + NADP(+) = dihydroxyacetone phosphate + NADPH + H(+). It functions in the pathway membrane lipid metabolism; glycerophospholipid metabolism. Its function is as follows. Catalyzes the reduction of the glycolytic intermediate dihydroxyacetone phosphate (DHAP) to sn-glycerol 3-phosphate (G3P), the key precursor for phospholipid synthesis. The protein is Glycerol-3-phosphate dehydrogenase [NAD(P)+] of Bifidobacterium longum subsp. infantis (strain ATCC 15697 / DSM 20088 / JCM 1222 / NCTC 11817 / S12).